The primary structure comprises 666 residues: uncharacterized protein (666 aa).

The protein belongs to the MG032/MG096/MG288 family.

This is an uncharacterized protein from Mycoplasma genitalium (strain ATCC 33530 / DSM 19775 / NCTC 10195 / G37) (Mycoplasmoides genitalium).